The following is a 392-amino-acid chain: Pectate lyase 3 (392 aa).

The first 25 residues, 1 to 25, serve as a signal peptide directing secretion; sequence MGIKHCCYILYFTLALVTLLQPVRS. N-linked (GlcNAc...) asparagine glycosylation occurs at asparagine 37. Residues cysteine 54 and cysteine 71 are joined by a disulfide bond. Ca(2+) contacts are provided by aspartate 194, aspartate 218, and aspartate 222. Arginine 270 is a catalytic residue.

Belongs to the polysaccharide lyase 1 family. Amb a subfamily. In terms of assembly, monomer. Ca(2+) is required as a cofactor. Post-translationally, the N-terminus is blocked. As to expression, pollen and flowers.

It catalyses the reaction Eliminative cleavage of (1-&gt;4)-alpha-D-galacturonan to give oligosaccharides with 4-deoxy-alpha-D-galact-4-enuronosyl groups at their non-reducing ends.. The protein operates within glycan metabolism; pectin degradation; 2-dehydro-3-deoxy-D-gluconate from pectin: step 2/5. Has pectate lyase activity. This is Pectate lyase 3 from Ambrosia artemisiifolia (Common ragweed).